The chain runs to 379 residues: MANLRKTHPLLKIANDALVDLPTPSNISAWWNFGSLLGLCLISQIITGLFLAMHYTSDISTAFSSVAHICRDVNYGWLIRNLHANGASFFFICLYLHIARGLYYGSYLYKETWNIGVVLFLLVMMTAFVGYVLPWGQMSFWGATVITNLLSAVPYVGDSLVQWIWGGFSVDNATLTRFFAFHFLFPFVVAGATMIHLLFLHETGSNNPVGLNSDADKIPFHPYFSYKDLLGFIIMLTALTMLALFYPNLLGDPDNFTPANPMVTPPHIKPEWYFLFAYAILRSIPNKLGGVLALLSSILVLMVVPILHTSKQRGLTFRPASQLLFWILVADMLVLTWIGGMPVEHPYIIIGQVASVLYFSLFLVLNPLVGWLENKMMNW.

The next 4 membrane-spanning stretches (helical) occupy residues 33–53 (FGSL…FLAM), 77–98 (WLIR…YLHI), 113–133 (WNIG…GYVL), and 178–198 (FFAF…IHLL). Positions 83 and 97 each coordinate heme b. Heme b contacts are provided by His-182 and His-196. Position 201 (His-201) interacts with a ubiquinone. Transmembrane regions (helical) follow at residues 226-246 (YKDL…ALFY), 288-308 (LGGV…PILH), 320-340 (ASQL…WIGG), and 347-367 (YIII…VLNP).

It belongs to the cytochrome b family. In terms of assembly, the cytochrome bc1 complex contains 3 respiratory subunits (MT-CYB, CYC1 and UQCRFS1), 2 core proteins (UQCRC1 and UQCRC2) and probably 6 low-molecular weight proteins. Requires heme b as cofactor.

Its subcellular location is the mitochondrion inner membrane. Its function is as follows. Component of the ubiquinol-cytochrome c reductase complex (complex III or cytochrome b-c1 complex) that is part of the mitochondrial respiratory chain. The b-c1 complex mediates electron transfer from ubiquinol to cytochrome c. Contributes to the generation of a proton gradient across the mitochondrial membrane that is then used for ATP synthesis. The sequence is that of Cytochrome b (mt-cyb) from Anguilla interioris (Highlands long-finned eel).